We begin with the raw amino-acid sequence, 144 residues long: MSNVAENISKLPEEQEKINKLVDQYKNLMPQEQKEVDKKLKLYFTKDELEQDELKSRMNKIRSNLSQQEQEKLQAGNSTIGEIAKDVLSLVKGIINLVENISKVIKNPTGAVYEWFQNELNQVKPQQQNNHQLQSKPKAASISR.

The segment covering 125-135 (PQQQNNHQLQS) has biased composition (polar residues). The tract at residues 125-144 (PQQQNNHQLQSKPKAASISR) is disordered.

This is an uncharacterized protein from Rickettsia prowazekii (strain Madrid E).